Consider the following 372-residue polypeptide: 4-hydroxy-3-methylbut-2-en-1-yl diphosphate synthase (flavodoxin) (372 aa).

Residues cysteine 270, cysteine 273, cysteine 305, and glutamate 312 each contribute to the [4Fe-4S] cluster site.

It belongs to the IspG family. Requires [4Fe-4S] cluster as cofactor.

It catalyses the reaction (2E)-4-hydroxy-3-methylbut-2-enyl diphosphate + oxidized [flavodoxin] + H2O + 2 H(+) = 2-C-methyl-D-erythritol 2,4-cyclic diphosphate + reduced [flavodoxin]. Its pathway is isoprenoid biosynthesis; isopentenyl diphosphate biosynthesis via DXP pathway; isopentenyl diphosphate from 1-deoxy-D-xylulose 5-phosphate: step 5/6. Converts 2C-methyl-D-erythritol 2,4-cyclodiphosphate (ME-2,4cPP) into 1-hydroxy-2-methyl-2-(E)-butenyl 4-diphosphate. This chain is 4-hydroxy-3-methylbut-2-en-1-yl diphosphate synthase (flavodoxin), found in Escherichia coli O9:H4 (strain HS).